We begin with the raw amino-acid sequence, 95 residues long: Aspartyl/glutamyl-tRNA(Asn/Gln) amidotransferase subunit C (95 aa).

It belongs to the GatC family. Heterotrimer of A, B and C subunits.

It carries out the reaction L-glutamyl-tRNA(Gln) + L-glutamine + ATP + H2O = L-glutaminyl-tRNA(Gln) + L-glutamate + ADP + phosphate + H(+). The catalysed reaction is L-aspartyl-tRNA(Asn) + L-glutamine + ATP + H2O = L-asparaginyl-tRNA(Asn) + L-glutamate + ADP + phosphate + 2 H(+). In terms of biological role, allows the formation of correctly charged Asn-tRNA(Asn) or Gln-tRNA(Gln) through the transamidation of misacylated Asp-tRNA(Asn) or Glu-tRNA(Gln) in organisms which lack either or both of asparaginyl-tRNA or glutaminyl-tRNA synthetases. The reaction takes place in the presence of glutamine and ATP through an activated phospho-Asp-tRNA(Asn) or phospho-Glu-tRNA(Gln). The protein is Aspartyl/glutamyl-tRNA(Asn/Gln) amidotransferase subunit C of Nitrosomonas europaea (strain ATCC 19718 / CIP 103999 / KCTC 2705 / NBRC 14298).